Consider the following 456-residue polypeptide: SWI/SNF complex component SNF12 homolog (456 aa).

Positions 234 to 310 (HVPQKYKVLG…PQLLREHLSP (77 aa)) constitute an SWIB/MDM2 domain. The disordered stretch occupies residues 435 to 456 (KQTTPNPTPQQISMAPSTPQTP).

The protein belongs to the SMARCD family. In terms of assembly, part of a SWI-SNF complex.

The protein localises to the nucleus. Functionally, involved in transcriptional activation and repression of select genes by chromatin remodeling (alteration of DNA-nucleosome topology). This is SWI/SNF complex component SNF12 homolog (snf12-1) from Dictyostelium discoideum (Social amoeba).